Here is a 155-residue protein sequence, read N- to C-terminus: Putative pre-16S rRNA nuclease (155 aa).

This sequence belongs to the YqgF nuclease family.

It localises to the cytoplasm. Its function is as follows. Could be a nuclease involved in processing of the 5'-end of pre-16S rRNA. The polypeptide is Putative pre-16S rRNA nuclease (Xanthomonas euvesicatoria pv. vesicatoria (strain 85-10) (Xanthomonas campestris pv. vesicatoria)).